A 57-amino-acid chain; its full sequence is Small ribosomal subunit protein bS21 (57 aa).

Belongs to the bacterial ribosomal protein bS21 family.

This is Small ribosomal subunit protein bS21 from Bacillus cytotoxicus (strain DSM 22905 / CIP 110041 / 391-98 / NVH 391-98).